A 116-amino-acid chain; its full sequence is Large ribosomal subunit protein bL20 (116 aa).

This sequence belongs to the bacterial ribosomal protein bL20 family.

Its function is as follows. Binds directly to 23S ribosomal RNA and is necessary for the in vitro assembly process of the 50S ribosomal subunit. It is not involved in the protein synthesizing functions of that subunit. The protein is Large ribosomal subunit protein bL20 of Mycoplasmopsis synoviae (strain 53) (Mycoplasma synoviae).